Consider the following 93-residue polypeptide: Small ribosomal subunit protein uS19 (93 aa).

It belongs to the universal ribosomal protein uS19 family.

In terms of biological role, protein S19 forms a complex with S13 that binds strongly to the 16S ribosomal RNA. The chain is Small ribosomal subunit protein uS19 from Phytoplasma australiense.